Consider the following 123-residue polypeptide: Cysteine-rich DPF motif domain-containing protein 1 (123 aa).

The interval 102 to 123 is disordered; that stretch reads RQDLEKRKAPSKRTPSQPGSRT. Residues 114 to 123 show a composition bias toward polar residues; it reads RTPSQPGSRT.

Belongs to the CDPF1 family.

The chain is Cysteine-rich DPF motif domain-containing protein 1 (CDPF1) from Homo sapiens (Human).